The primary structure comprises 78 residues: MSCSGGNCGCGSSCSCGSGCGGCRMLTDLGEERSSTSQTMIMGVAPQKGHFEELETAAGSDNGCKCGSNCTCDPCNCK.

Belongs to the metallothionein superfamily. Type 15 family.

Functionally, metallothioneins have a high content of cysteine residues that bind various heavy metals. The protein is Metallothionein-like protein type 2 of Musa acuminata (Banana).